Consider the following 466-residue polypeptide: Alpha-1A adrenergic receptor (466 aa).

At Met-1–Ile-27 the chain is on the extracellular side. Asn-7, Asn-13, and Asn-22 each carry an N-linked (GlcNAc...) asparagine glycan. The helical transmembrane segment at Leu-28–Val-51 threads the bilayer. The Cytoplasmic portion of the chain corresponds to Ala-52 to Tyr-64. A helical transmembrane segment spans residues Ile-65–Ile-88. Residues Leu-89–Cys-99 are Extracellular-facing. Cys-99 and Cys-176 are oxidised to a cystine. Residues Asn-100–Ile-122 form a helical membrane-spanning segment. Topologically, residues Asp-123–Gly-143 are cytoplasmic. A helical membrane pass occupies residues Leu-144–Gln-167. Residues Pro-168–Glu-181 are Extracellular-facing. The chain crosses the membrane as a helical span at residues Pro-182 to Cys-205. Residues Arg-206–Thr-273 are Cytoplasmic-facing. Residue Ser-215 is modified to Phosphoserine; by PKA. The chain crosses the membrane as a helical span at residues Leu-274 to Phe-297. Topologically, residues Phe-298–Glu-305 are extracellular. The helical transmembrane segment at Thr-306–Ser-329 threads the bilayer. The Cytoplasmic segment spans residues Ser-330–Val-466. The Nuclear localization signal motif lies at Lys-334–Lys-349. Residue Cys-345 is the site of S-palmitoyl cysteine attachment.

Belongs to the G-protein coupled receptor 1 family. Adrenergic receptor subfamily. ADRA1A sub-subfamily. In terms of assembly, homo- and heterooligomer. Heterooligomerizes with ADRA1B homooligomers in cardiac myocytes. Interacts with CAVIN4.

It localises to the nucleus membrane. Its subcellular location is the cell membrane. The protein localises to the cytoplasm. It is found in the membrane. The protein resides in the caveola. Functionally, this alpha-adrenergic receptor mediates its action by association with G proteins that activate a phosphatidylinositol-calcium second messenger system. Its effect is mediated by G(q) and G(11) proteins. Nuclear ADRA1A-ADRA1B heterooligomers regulate phenylephrine (PE)-stimulated ERK signaling in cardiac myocytes. The chain is Alpha-1A adrenergic receptor (ADRA1A) from Bos taurus (Bovine).